The following is a 348-amino-acid chain: Heat-inducible transcription repressor HrcA (348 aa).

Belongs to the HrcA family.

In terms of biological role, negative regulator of class I heat shock genes (grpE-dnaK-dnaJ and groELS operons). Prevents heat-shock induction of these operons. This Pelotomaculum thermopropionicum (strain DSM 13744 / JCM 10971 / SI) protein is Heat-inducible transcription repressor HrcA.